The primary structure comprises 58 residues: Small ribosomal subunit protein bS21 (58 aa).

Residues 34-58 (KREHYESPSVRRKKKSEAARRRKRR) are disordered. Residues 43–58 (VRRKKKSEAARRRKRR) are compositionally biased toward basic residues.

Belongs to the bacterial ribosomal protein bS21 family.

This chain is Small ribosomal subunit protein bS21, found in Caldicellulosiruptor bescii (strain ATCC BAA-1888 / DSM 6725 / KCTC 15123 / Z-1320) (Anaerocellum thermophilum).